A 151-amino-acid chain; its full sequence is MATLEQNLQEMLQDAVEDLGCELWGIECQRVGRFMTVRLFIDKDGGVTVDDCADVSRQVSAILDVEDPIADKYNLEVSSPGLDRPLFTLPQFERYIGQDIAVHLRIPVMERRKWQGKLERIEKDMITLIVDDQEQILVFGNIQKANVVAKF.

Belongs to the RimP family.

Its subcellular location is the cytoplasm. Required for maturation of 30S ribosomal subunits. The chain is Ribosome maturation factor RimP from Haemophilus influenzae (strain PittGG).